Consider the following 92-residue polypeptide: Small ribosomal subunit protein uS19c (92 aa).

Belongs to the universal ribosomal protein uS19 family.

The protein localises to the plastid. It is found in the chloroplast. Functionally, protein S19 forms a complex with S13 that binds strongly to the 16S ribosomal RNA. This chain is Small ribosomal subunit protein uS19c (rps19), found in Guillardia theta (Cryptophyte).